Here is a 318-residue protein sequence, read N- to C-terminus: ADP-L-glycero-D-manno-heptose-6-epimerase (318 aa).

Residues Phe-10–Ile-11, Asp-31–Asn-32, Lys-38, Lys-53, Gln-76–Ser-80, and Asn-93 contribute to the NADP(+) site. Tyr-141 functions as the Proton acceptor in the catalytic mechanism. Lys-145 provides a ligand contact to NADP(+). Substrate is bound at residue Asn-172. Residues Val-173 and Lys-181 each contribute to the NADP(+) site. Lys-181 (proton acceptor) is an active-site residue. Substrate-binding positions include Arg-183, His-190, Phe-204–Ser-207, Arg-212, and Tyr-276.

Belongs to the NAD(P)-dependent epimerase/dehydratase family. HldD subfamily. Homopentamer. NADP(+) serves as cofactor.

It catalyses the reaction ADP-D-glycero-beta-D-manno-heptose = ADP-L-glycero-beta-D-manno-heptose. It participates in nucleotide-sugar biosynthesis; ADP-L-glycero-beta-D-manno-heptose biosynthesis; ADP-L-glycero-beta-D-manno-heptose from D-glycero-beta-D-manno-heptose 7-phosphate: step 4/4. Catalyzes the interconversion between ADP-D-glycero-beta-D-manno-heptose and ADP-L-glycero-beta-D-manno-heptose via an epimerization at carbon 6 of the heptose. The protein is ADP-L-glycero-D-manno-heptose-6-epimerase of Brachyspira hyodysenteriae (strain ATCC 49526 / WA1).